Here is a 469-residue protein sequence, read N- to C-terminus: Receptor-type adenylate cyclase (469 aa).

Over Val-1–Ala-59 the chain is Extracellular. N-linked (GlcNAc...) asparagine glycosylation occurs at Asn-31. A helical membrane pass occupies residues Leu-60–Val-80. The Cytoplasmic segment spans residues Pro-81 to Ser-469. Positions Thr-103–Glu-257 constitute a Guanylate cyclase domain. Residues Asp-108 and Asp-151 each contribute to the Mg(2+) site.

Belongs to the adenylyl cyclase class-3 family. The cofactor is Mg(2+).

It localises to the cell membrane. It carries out the reaction ATP = 3',5'-cyclic AMP + diphosphate. Functionally, could act as a receptor for an unknown ligand. The chain is Receptor-type adenylate cyclase (ESAG4C) from Trypanosoma equiperdum.